The sequence spans 159 residues: Ribosomal RNA large subunit methyltransferase H (159 aa).

S-adenosyl-L-methionine is bound by residues L76, G107, and 126–131; that span reads LSKLTM.

Belongs to the RNA methyltransferase RlmH family. As to quaternary structure, homodimer.

It localises to the cytoplasm. It catalyses the reaction pseudouridine(1915) in 23S rRNA + S-adenosyl-L-methionine = N(3)-methylpseudouridine(1915) in 23S rRNA + S-adenosyl-L-homocysteine + H(+). Its function is as follows. Specifically methylates the pseudouridine at position 1915 (m3Psi1915) in 23S rRNA. The protein is Ribosomal RNA large subunit methyltransferase H of Acinetobacter baumannii (strain AB307-0294).